A 464-amino-acid polypeptide reads, in one-letter code: Fumarate hydratase class II (464 aa).

Residues 97 to 99 (SGT), 128 to 131 (HPND), 138 to 140 (SSN), and T186 each bind substrate. H187 acts as the Proton donor/acceptor in catalysis. S317 is an active-site residue. Residues S318 and 323-325 (KVN) contribute to the substrate site.

Belongs to the class-II fumarase/aspartase family. Fumarase subfamily. As to quaternary structure, homotetramer.

It localises to the cytoplasm. The enzyme catalyses (S)-malate = fumarate + H2O. It functions in the pathway carbohydrate metabolism; tricarboxylic acid cycle; (S)-malate from fumarate: step 1/1. In terms of biological role, involved in the TCA cycle. Catalyzes the stereospecific interconversion of fumarate to L-malate. This chain is Fumarate hydratase class II, found in Leptospira interrogans serogroup Icterohaemorrhagiae serovar copenhageni (strain Fiocruz L1-130).